The primary structure comprises 156 residues: ATP synthase subunit b (156 aa).

A helical transmembrane segment spans residues 1–21 (MSINATLLIQIIAFVLLIWFV).

This sequence belongs to the ATPase B chain family. F-type ATPases have 2 components, F(1) - the catalytic core - and F(0) - the membrane proton channel. F(1) has five subunits: alpha(3), beta(3), gamma(1), delta(1), epsilon(1). F(0) has three main subunits: a(1), b(2) and c(10-14). The alpha and beta chains form an alternating ring which encloses part of the gamma chain. F(1) is attached to F(0) by a central stalk formed by the gamma and epsilon chains, while a peripheral stalk is formed by the delta and b chains.

It localises to the cell inner membrane. In terms of biological role, f(1)F(0) ATP synthase produces ATP from ADP in the presence of a proton or sodium gradient. F-type ATPases consist of two structural domains, F(1) containing the extramembraneous catalytic core and F(0) containing the membrane proton channel, linked together by a central stalk and a peripheral stalk. During catalysis, ATP synthesis in the catalytic domain of F(1) is coupled via a rotary mechanism of the central stalk subunits to proton translocation. Functionally, component of the F(0) channel, it forms part of the peripheral stalk, linking F(1) to F(0). The chain is ATP synthase subunit b from Hydrogenovibrio crunogenus (strain DSM 25203 / XCL-2) (Thiomicrospira crunogena).